Consider the following 132-residue polypeptide: ATP synthase epsilon chain, chloroplastic (132 aa).

It belongs to the ATPase epsilon chain family. F-type ATPases have 2 components, CF(1) - the catalytic core - and CF(0) - the membrane proton channel. CF(1) has five subunits: alpha(3), beta(3), gamma(1), delta(1), epsilon(1). CF(0) has three main subunits: a, b and c.

Its subcellular location is the plastid. The protein localises to the chloroplast thylakoid membrane. Its function is as follows. Produces ATP from ADP in the presence of a proton gradient across the membrane. The polypeptide is ATP synthase epsilon chain, chloroplastic (Calycanthus floridus var. glaucus (Eastern sweetshrub)).